Here is a 104-residue protein sequence, read N- to C-terminus: NADH-quinone oxidoreductase subunit K (104 aa).

3 helical membrane-spanning segments follow: residues 4 to 24, 31 to 51, and 67 to 87; these read VPASAYLTLAIILFCIGLFGA, VIVLVCIELMLNAANLNLVAF, and LFTMAVAAAEAALGLAILIAL.

The protein belongs to the complex I subunit 4L family. As to quaternary structure, NDH-1 is composed of 14 different subunits. Subunits NuoA, H, J, K, L, M, N constitute the membrane sector of the complex.

It is found in the cell membrane. It carries out the reaction a quinone + NADH + 5 H(+)(in) = a quinol + NAD(+) + 4 H(+)(out). NDH-1 shuttles electrons from NADH, via FMN and iron-sulfur (Fe-S) centers, to quinones in the respiratory chain. The immediate electron acceptor for the enzyme in this species is believed to be a menaquinone. Couples the redox reaction to proton translocation (for every two electrons transferred, four hydrogen ions are translocated across the cytoplasmic membrane), and thus conserves the redox energy in a proton gradient. The chain is NADH-quinone oxidoreductase subunit K from Bacillus cereus (strain ATCC 14579 / DSM 31 / CCUG 7414 / JCM 2152 / NBRC 15305 / NCIMB 9373 / NCTC 2599 / NRRL B-3711).